Reading from the N-terminus, the 285-residue chain is Bifunctional protein FolD (285 aa).

NADP(+) is bound by residues 166–168 (GRS), serine 191, and threonine 232.

Belongs to the tetrahydrofolate dehydrogenase/cyclohydrolase family. Homodimer.

It carries out the reaction (6R)-5,10-methylene-5,6,7,8-tetrahydrofolate + NADP(+) = (6R)-5,10-methenyltetrahydrofolate + NADPH. The enzyme catalyses (6R)-5,10-methenyltetrahydrofolate + H2O = (6R)-10-formyltetrahydrofolate + H(+). The protein operates within one-carbon metabolism; tetrahydrofolate interconversion. In terms of biological role, catalyzes the oxidation of 5,10-methylenetetrahydrofolate to 5,10-methenyltetrahydrofolate and then the hydrolysis of 5,10-methenyltetrahydrofolate to 10-formyltetrahydrofolate. The chain is Bifunctional protein FolD from Chloroflexus aurantiacus (strain ATCC 29366 / DSM 635 / J-10-fl).